The sequence spans 55 residues: ATP synthase F(0) complex subunit 8 (55 aa).

A helical membrane pass occupies residues N7 to I24. A disordered region spans residues N35–T55. Residues P37–T55 show a composition bias toward low complexity.

This sequence belongs to the ATPase protein 8 family. In terms of assembly, component of the ATP synthase complex composed at least of ATP5F1A/subunit alpha, ATP5F1B/subunit beta, ATP5MC1/subunit c (homooctomer), MT-ATP6/subunit a, MT-ATP8/subunit 8, ATP5ME/subunit e, ATP5MF/subunit f, ATP5MG/subunit g, ATP5MK/subunit k, ATP5MJ/subunit j, ATP5F1C/subunit gamma, ATP5F1D/subunit delta, ATP5F1E/subunit epsilon, ATP5PF/subunit F6, ATP5PB/subunit b, ATP5PD/subunit d, ATP5PO/subunit OSCP. ATP synthase complex consists of a soluble F(1) head domain (subunits alpha(3) and beta(3)) - the catalytic core - and a membrane F(0) domain - the membrane proton channel (subunits c, a, 8, e, f, g, k and j). These two domains are linked by a central stalk (subunits gamma, delta, and epsilon) rotating inside the F1 region and a stationary peripheral stalk (subunits F6, b, d, and OSCP).

The protein resides in the mitochondrion membrane. In terms of biological role, subunit 8, of the mitochondrial membrane ATP synthase complex (F(1)F(0) ATP synthase or Complex V) that produces ATP from ADP in the presence of a proton gradient across the membrane which is generated by electron transport complexes of the respiratory chain. ATP synthase complex consist of a soluble F(1) head domain - the catalytic core - and a membrane F(1) domain - the membrane proton channel. These two domains are linked by a central stalk rotating inside the F(1) region and a stationary peripheral stalk. During catalysis, ATP synthesis in the catalytic domain of F(1) is coupled via a rotary mechanism of the central stalk subunits to proton translocation. In vivo, can only synthesize ATP although its ATP hydrolase activity can be activated artificially in vitro. Part of the complex F(0) domain. The sequence is that of ATP synthase F(0) complex subunit 8 from Chaetura pelagica (Chimney swift).